We begin with the raw amino-acid sequence, 273 residues long: DNA repair protein RecO (273 aa).

The disordered stretch occupies residues 250 to 273; the sequence is NVGQNPSGKDDLNERRDVDGTGES. Over residues 257 to 273 the composition is skewed to basic and acidic residues; sequence GKDDLNERRDVDGTGES.

The protein belongs to the RecO family.

Its function is as follows. Involved in DNA repair and RecF pathway recombination. This chain is DNA repair protein RecO, found in Desulfitobacterium hafniense (strain Y51).